The following is a 792-amino-acid chain: MAFSGIYKLDDGKPYLNNCFPARNLLRVPEEGQGHWLVVQKGNLKKKPKGLVGAQAERRESLKATSFEFKGKKESRRENQVDLPGHILDQAFLLKHHCVRKPSDLCTINAKENDFKHFHSVIYINASENLLPLEAFHTFPALKELDLAFNGIKTIYVKYGDFKLLEFLDLSFNSLTVEAICDLGILPHLRVLLLTGNGLTSLPPNLAVAEQEASVTSLTSKRYILRFPALETLMLDDNRLSNPSCFASLAGLRRLKKLSLDENRIIRIPYLQQVQLYDESVDWNGGRGSPHKEPQFMLQSKPRMLEDSDEQLDYTVLPMKKDVDRTEVVFSSYPGFSTSETTKICSLPPIFEILPVKSLKARNQTLAPPFPELRYLSLAYNKIAKEDAVLPVALFPSLCEFVFHNNPLVAHTRGVPPLLKSFLQERLGIHLIRRKIVKPKHHVLMSRKESWKVKSEIPKVPKQPLVLHHPRMTTTKSPSKDMLEPEAELAEDLPTTKSTSVESEMPTENLEGHSPSCRTFVPLPPICSNSTVHSEETLSHLSDTTVRLSPERPSDEDSKSTESIFLTQVSELPSSVIHKDDLELKEKDQKKPPTAPREVKGTRRKLPTAFLPSKYHGYEELLTAKPDPAFIEPKGIQKNAQALQQMLKHPLLCHSSKPKLDTLQKPYVHKEKRAQRIPIPPPKKTRAQLLDDIFIRLRDPRNITEAPLGAVLHQWTERRLVNHKQYLEAKRLLKEFQARYRQLVSGSLRTVFGTTPLPMACPALSESQPKFGHFLEFMDEFCQEPTASDSQG.

LRR repeat units follow at residues 104 to 125, 141 to 155, 164 to 184, 188 to 209, 229 to 250, and 254 to 275; these read DLCT…IYIN, ALKE…IKTI, LLEF…CDLG, HLRV…LAVA, ALET…ASLA, and RLKK…QQVQ. 3 disordered regions span residues 490 to 517, 537 to 562, and 577 to 601; these read AEDL…SPSC, TLSH…KSTE, and IHKD…EVKG. Residues 549–560 are compositionally biased toward basic and acidic residues; it reads SPERPSDEDSKS. A coiled-coil region spans residues 723 to 745; that stretch reads HKQYLEAKRLLKEFQARYRQLVS.

Expressed predominantly in testis followed by prostate and ovary. Low levels found in other tissues including peripheral blood leukocytes, spleen, thymus, small intestine and colon. Also expressed in neuroblastoma, glioma, breast, lung, leukemia, renal, ovarian, prostate and colorectal cancer cell lines.

It localises to the cytoplasm. Its subcellular location is the nucleus. May be involved in the response of cells to X-ray radiation. This is X-ray radiation resistance-associated protein 1 from Homo sapiens (Human).